The following is a 61-amino-acid chain: Large ribosomal subunit protein bL28 (61 aa).

The protein belongs to the bacterial ribosomal protein bL28 family.

The chain is Large ribosomal subunit protein bL28 from Geobacillus thermodenitrificans (strain NG80-2).